The sequence spans 492 residues: Heat shock factor protein 4 (492 aa).

A DNA-binding region spans residues 17–121; the sequence is VPAFLGKLWA…QLLERVRRKV (105 aa). The tract at residues 129–203 is hydrophobic repeat HR-A/B; that stretch reads GRWRPEDLGR…GPLQAGPSNA (75 aa). An interactions with DUSP26, MAPK1 and MAPK2 region spans residues 245-322; it reads LPETNLGLSP…ECDFCVTAPP (78 aa). Residues 246–285 are disordered; it reads PETNLGLSPHRARGPIISDIPEDSPSPEGTRLSPSSDGRR. K293 is covalently cross-linked (Glycyl lysine isopeptide (Lys-Gly) (interchain with G-Cter in SUMO)). S298 carries the phosphoserine modification. The disordered stretch occupies residues 337-400; sequence GSFSPEGPRN…PAGPLDVLGP (64 aa). The tract at residues 364–389 is hydrophobic repeat HR-C; the sequence is LGLESGDRSPESLLPPMLLQPPQESV. Residues 374-388 show a composition bias toward low complexity; it reads ESLLPPMLLQPPQES.

This sequence belongs to the HSF family. Homotrimer. Exhibits constitutive DNA binding and forms trimers even in the absence of stress. Interacts with ALKBH4, DUSP26, MAPK1, MAPK2, MAPK8 and MAP kinase p38. Phosphorylated mainly on serine residues. Phosphorylation on Ser-298 promotes sumoylation on Lys-293. In terms of processing, isoform HSF4B is constitutively sumoylated. Sumoylation represses the transcriptional activity and is promoted by phosphorylation on Ser-298. HSFA is not sumoylated. In terms of tissue distribution, expressed in heart, skeletal muscle, eye and brain, and at much lower levels in some other tissues.

It is found in the nucleus. Its function is as follows. Heat-shock transcription factor that specifically binds heat shock promoter elements (HSE). Required for denucleation and organelle rupture and degradation that occur during eye lens terminal differentiation, when fiber cells that compose the lens degrade all membrane-bound organelles in order to provide lens with transparency to allow the passage of light. In this process, may regulate denucleation of lens fiber cells in part by activating DNASE2B transcription. May be involved in DNA repair through the transcriptional regulation of RAD51. May up-regulate p53/TP53 protein in eye lens fiber cells, possibly through protein stabilization. In the eye lens, controls the expression of alpha-crystallin B chain/CRYAB and consequently may be involved in the regulation of lysosomal acidification. Transcriptional repressor. Functionally, transcriptional activator. The sequence is that of Heat shock factor protein 4 (HSF4) from Homo sapiens (Human).